Here is a 255-residue protein sequence, read N- to C-terminus: MRILLSNDDGYFAPGLACLAEALSVIADIVVVAPERDRSGASNSLTLDRPLSLRKSHNGFYYVNGTPTDCVHLAVTGMLDTLPDMVVSGINDGANMGDDTIYSGTVAAATEGFLLGVPSLAISLAGFSAGNFPTAARVAAEIVRRFETDKLHGPVLLNINVPDIPYDELQGLEVTRLGRRHKAEPVVKYKTPRGETVYWVGAAGPAQDAGEGTDFLAIQRKRVSVTPLQIDLTRYGQLDAVKEWLNSHALGSTRS.

Positions 8, 9, 39, and 91 each coordinate a divalent metal cation.

This sequence belongs to the SurE nucleotidase family. A divalent metal cation serves as cofactor.

The protein resides in the cytoplasm. It carries out the reaction a ribonucleoside 5'-phosphate + H2O = a ribonucleoside + phosphate. Functionally, nucleotidase that shows phosphatase activity on nucleoside 5'-monophosphates. This Nitrosospira multiformis (strain ATCC 25196 / NCIMB 11849 / C 71) protein is 5'-nucleotidase SurE.